The chain runs to 187 residues: UPF0301 protein VSAL_I0547 (187 aa).

The protein belongs to the UPF0301 (AlgH) family.

The chain is UPF0301 protein VSAL_I0547 from Aliivibrio salmonicida (strain LFI1238) (Vibrio salmonicida (strain LFI1238)).